The primary structure comprises 207 residues: Ribosome maturation factor RimP (207 aa).

Residues 171–207 (RAPGGAPEEGEEDTTEAAPEGAGKSPKPGRRPARKTH) form a disordered region. Residues 197-207 (KPGRRPARKTH) are compositionally biased toward basic residues.

This sequence belongs to the RimP family.

The protein resides in the cytoplasm. In terms of biological role, required for maturation of 30S ribosomal subunits. The polypeptide is Ribosome maturation factor RimP (Gluconacetobacter diazotrophicus (strain ATCC 49037 / DSM 5601 / CCUG 37298 / CIP 103539 / LMG 7603 / PAl5)).